Here is a 41-residue protein sequence, read N- to C-terminus: Large ribosomal subunit protein bL36 (41 aa).

The protein belongs to the bacterial ribosomal protein bL36 family.

The sequence is that of Large ribosomal subunit protein bL36 from Rhodopseudomonas palustris (strain HaA2).